The chain runs to 76 residues: Bomanin Tailed 2 (76 aa).

The N-terminal stretch at 1 to 22 is a signal peptide; sequence MKALQVAGTLMLLFCLLAAVNA. Positions 23 to 24 are cleaved as a propeptide — removed by a dipeptidylpeptidase; it reads TP. An intrachain disulfide couples cysteine 33 to cysteine 36.

The protein belongs to the bomanin family.

It is found in the secreted. Functionally, secreted immune-induced peptide induced by Toll signaling. Has a role in resistance to bacterial and fungal infections. The strength of antimicrobial activity appears to correlate with the overall level of expression. The polypeptide is Bomanin Tailed 2 (Drosophila melanogaster (Fruit fly)).